The primary structure comprises 117 residues: Large ribosomal subunit protein uL18 (117 aa).

This sequence belongs to the universal ribosomal protein uL18 family. In terms of assembly, part of the 50S ribosomal subunit; part of the 5S rRNA/L5/L18/L25 subcomplex. Contacts the 5S and 23S rRNAs.

Functionally, this is one of the proteins that bind and probably mediate the attachment of the 5S RNA into the large ribosomal subunit, where it forms part of the central protuberance. The polypeptide is Large ribosomal subunit protein uL18 (Nitrosococcus oceani (strain ATCC 19707 / BCRC 17464 / JCM 30415 / NCIMB 11848 / C-107)).